A 363-amino-acid polypeptide reads, in one-letter code: Cytochrome c oxidase subunit 2 (363 aa).

The disordered stretch occupies residues 1–23 (MTPRGPGRLQRLSQCRPQRGSGG). Positions 1 to 41 (MTPRGPGRLQRLSQCRPQRGSGGPARGLRQLALAAMLGALA) are cleaved as a signal peptide. 2 helical membrane passes run 71-91 (LWIGAVIASLAVGVIVWGLIF) and 118-138 (LVLTVIPFLIISVLFYFTVVV). Residues histidine 254, cysteine 295, cysteine 299, and histidine 303 each contribute to the Cu cation site.

This sequence belongs to the cytochrome c oxidase subunit 2 family. Requires Cu cation as cofactor. Heme serves as cofactor.

It is found in the cell membrane. The enzyme catalyses 4 Fe(II)-[cytochrome c] + O2 + 8 H(+)(in) = 4 Fe(III)-[cytochrome c] + 2 H2O + 4 H(+)(out). Subunits I and II form the functional core of the enzyme complex. Electrons originating in cytochrome c are transferred via heme a and Cu(A) to the binuclear center formed by heme a3 and Cu(B). This Mycobacterium bovis (strain ATCC BAA-935 / AF2122/97) protein is Cytochrome c oxidase subunit 2 (ctaC).